The following is a 248-amino-acid chain: GPN-loop GTPase PAB0955 (248 aa).

Residue 10–15 participates in GTP binding; it reads GSGKTT. Residues 65–67 carry the Gly-Pro-Asn (GPN)-loop; involved in dimer interface motif; the sequence is GPN. GTP is bound by residues 165 to 168 and Ala-224; that span reads NKVD.

The protein belongs to the GPN-loop GTPase family. As to quaternary structure, homodimer. Interacts with DNA topoisomerase VI subunit B (top6B), DNA primase DnaG and RF-C.

Its function is as follows. Small GTPase that may be involved in genome maintenance. Has weak intrinsic GTPase activity but displays no ATPase activity. This Pyrococcus abyssi (strain GE5 / Orsay) protein is GPN-loop GTPase PAB0955.